Reading from the N-terminus, the 330-residue chain is uncharacterized protein (330 aa).

Residues 96 to 256 (AALEFDFTDL…LMLAALRKKL (161 aa)) enclose the JmjC domain. His145, Asp147, and His224 together coordinate Fe cation.

This sequence belongs to the ROX family. The cofactor is Fe(2+).

This is an uncharacterized protein from Bacillus subtilis (strain 168).